The sequence spans 745 residues: Cellulose synthase-like protein E2 (745 aa).

A compositionally biased stretch (gly residues) spans Met1–Gln14. The segment at Met1–Phe20 is disordered. A run of 2 helical transmembrane segments spans residues Ala29–Leu49 and Trp66–Leu86. Catalysis depends on residues Asp155 and Asp458. A run of 5 helical transmembrane segments spans residues Phe541 to Phe561, Trp568 to Leu588, Ala658 to Ile678, Gly686 to Ile706, and Leu723 to Ile743.

The protein belongs to the glycosyltransferase 2 family. Plant cellulose synthase-like E subfamily.

The protein resides in the golgi apparatus membrane. In terms of biological role, thought to be a Golgi-localized beta-glycan synthase that polymerize the backbones of noncellulosic polysaccharides (hemicelluloses) of plant cell wall. The polypeptide is Cellulose synthase-like protein E2 (CSLE2) (Oryza sativa subsp. japonica (Rice)).